The primary structure comprises 1162 residues: Cartilage intermediate layer protein 2 (1162 aa).

The N-terminal stretch at 1–20 (MASPLPLLYLCLAALHLAGA) is a signal peptide. Residues 23 to 51 (ATPTEEHTSTARGLQGRPPDTGQPSPALE) form a disordered region. The 52-residue stretch at 146 to 197 (EAAWGAWGAWGLCSKSCGLGRRLRRRSCQSSSGDTCPGSPQEAQKCVRSRCP) folds into the TSP type-1 domain. Cystine bridges form between C158-C191, C162-C196, C173-C181, and C314-C360. Residues 293–377 (PYLVKHPESR…TVRSRAALLT (85 aa)) enclose the Ig-like C2-type domain. Residue N330 is glycosylated (N-linked (GlcNAc...) asparagine).

Post-translationally, may be cleaved into 2 chains possibly by a furin-like protease upon or preceding secretion. In terms of processing, N-glycosylated. Expressed in articulated and meniscal cartilage (at protein level). Also detected in heart, skeletal muscle and brain. Not detected in growth plate cartilage.

The protein localises to the secreted. Its subcellular location is the extracellular space. The protein resides in the extracellular matrix. Functionally, may play a role in cartilage scaffolding. The chain is Cartilage intermediate layer protein 2 from Mus musculus (Mouse).